Here is a 540-residue protein sequence, read N- to C-terminus: CTP synthase (540 aa).

The tract at residues 1 to 273 (MNNKDLKTKF…DDFILQHFKL (273 aa)) is amidoligase domain. Serine 19 is a binding site for CTP. Serine 19 is a binding site for UTP. 20 to 25 (SLGKGI) lines the ATP pocket. Tyrosine 60 lines the L-glutamine pocket. Residue aspartate 77 coordinates ATP. Residues aspartate 77 and glutamate 147 each coordinate Mg(2+). Residues 154–156 (DIE), 194–199 (KTKPTQ), and lysine 230 contribute to the CTP site. Residues 194 to 199 (KTKPTQ) and lysine 230 contribute to the UTP site. One can recognise a Glutamine amidotransferase type-1 domain in the interval 306 to 539 (YIVLHDAYLS…VEASLLNQKN (234 aa)). An L-glutamine-binding site is contributed by glycine 361. The active-site Nucleophile; for glutamine hydrolysis is cysteine 388. Residues 389-392 (LGMQ), glutamate 412, and arginine 466 contribute to the L-glutamine site. Residues histidine 512 and glutamate 514 contribute to the active site.

This sequence belongs to the CTP synthase family. As to quaternary structure, homotetramer.

The catalysed reaction is UTP + L-glutamine + ATP + H2O = CTP + L-glutamate + ADP + phosphate + 2 H(+). It catalyses the reaction L-glutamine + H2O = L-glutamate + NH4(+). The enzyme catalyses UTP + NH4(+) + ATP = CTP + ADP + phosphate + 2 H(+). Its pathway is pyrimidine metabolism; CTP biosynthesis via de novo pathway; CTP from UDP: step 2/2. Its activity is regulated as follows. Allosterically activated by GTP, when glutamine is the substrate; GTP has no effect on the reaction when ammonia is the substrate. The allosteric effector GTP functions by stabilizing the protein conformation that binds the tetrahedral intermediate(s) formed during glutamine hydrolysis. Inhibited by the product CTP, via allosteric rather than competitive inhibition. Functionally, catalyzes the ATP-dependent amination of UTP to CTP with either L-glutamine or ammonia as the source of nitrogen. Regulates intracellular CTP levels through interactions with the four ribonucleotide triphosphates. The sequence is that of CTP synthase from Onion yellows phytoplasma (strain OY-M).